We begin with the raw amino-acid sequence, 359 residues long: Protein FAM50 homolog (359 aa).

Disordered stretches follow at residues 122 to 150 (NLDDDEEEEEEDDEDHDKKQLKIKQEDQP) and 339 to 359 (PYDPTKSYDKYTIKDKDKSKK). Over residues 123–136 (LDDDEEEEEEDDED) the composition is skewed to acidic residues. The segment covering 137–150 (HDKKQLKIKQEDQP) has biased composition (basic and acidic residues).

This sequence belongs to the FAM50 family.

The sequence is that of Protein FAM50 homolog from Drosophila melanogaster (Fruit fly).